Reading from the N-terminus, the 338-residue chain is Nuclear hormone receptor family member nhr-52 (338 aa).

The segment at residues 1 to 75 (MKCLVCCSYA…IGMRFSEPKQ (75 aa)) is a DNA-binding region (nuclear receptor). 2 NR C4-type zinc fingers span residues 3 to 23 (CLVCCSYASSRNFGALSCSAC) and 39 to 63 (CKYDKKCFESFTILPKCQFCRFKKC). The region spanning 98–337 (KDGVHYSNFL…KKLVNDIIIR (240 aa)) is the NR LBD domain.

The protein belongs to the nuclear hormone receptor family.

The protein localises to the nucleus. Orphan nuclear receptor. The polypeptide is Nuclear hormone receptor family member nhr-52 (nhr-52) (Caenorhabditis elegans).